Consider the following 407-residue polypeptide: 4-hydroxybenzoate polyprenyltransferase, mitochondrial (407 aa).

The transit peptide at 1–20 (MAFFGLSRVSRRLLKSSVSV) directs the protein to the mitochondrion. 6 helical membrane-spanning segments follow: residues 137-157 (IGTWLLAWPCMWSIALAADPG), 162-182 (FKYMALFGCGALLLRGAGCTI), 210-230 (FQGIGFLGLQLLLGLGILLQL), 254-274 (FTFWPQAFLGLTINWGALLGW), 279-299 (GSIAPSIVLPLYLSGVCWTLV), and 330-350 (LWLTGFGTASIGFLALSGFSA).

It belongs to the UbiA prenyltransferase family. Mg(2+) serves as cofactor. As to expression, expressed in flowers.

Its subcellular location is the mitochondrion inner membrane. It carries out the reaction an all-trans-polyprenyl diphosphate + 4-hydroxybenzoate = a 4-hydroxy-3-(all-trans-polyprenyl)benzoate + diphosphate. The protein operates within cofactor biosynthesis; ubiquinone biosynthesis. Its function is as follows. Catalyzes the prenylation of para-hydroxybenzoate (PHB) with an all-trans polyprenyl group. Mediates the second step in the final reaction sequence of coenzyme Q (CoQ) biosynthesis, which is the condensation of the polyisoprenoid side chain with PHB, generating the first membrane-bound Q intermediate. Required for embryo development. This chain is 4-hydroxybenzoate polyprenyltransferase, mitochondrial, found in Arabidopsis thaliana (Mouse-ear cress).